Consider the following 333-residue polypeptide: NADH dehydrogenase (ubiquinone) complex I, assembly factor 6 (333 aa).

The N-terminal 44 residues, 1-44 (MAASTLGSAWGPLRLGVPGLCRRRPPRGLWARARRLSEPVASGR), are a transit peptide targeting the mitochondrion.

Belongs to the NDUFAF6 family.

Its subcellular location is the mitochondrion inner membrane. Functionally, involved in the assembly of mitochondrial NADH:ubiquinone oxidoreductase complex (complex I) at early stages. May play a role in the biogenesis of complex I subunit MT-ND1. The protein is NADH dehydrogenase (ubiquinone) complex I, assembly factor 6 (NDUFAF6) of Bos taurus (Bovine).